A 482-amino-acid polypeptide reads, in one-letter code: Iroquois-class homeodomain protein irx-5 (482 aa).

The segment at residues 109–171 is a DNA-binding region (homeobox); sequence DPAYRKNATR…NARRRLKKEN (63 aa). Disordered regions lie at residues 173-307 and 462-482; these read MTWT…HQSH and QSQA…MSSI. Over residues 182–198 the composition is skewed to acidic residues; it reads EDEEDDENIDLEKNEED. Basic and acidic residues predominate over residues 199 to 256; sequence DPRKLEEKGDQDGDAGDQKRSPSAVDFDRLEGEVRQGKELDQTRSDSEQNEVEERNDL. Pro residues predominate over residues 264–273; it reads PTSPLCPPDQ. The span at 284–305 shows a compositional bias: basic residues; that stretch reads HRHTVHNHHHQSIQQLHHHSHQ. Residues 467-482 are compositionally biased toward basic and acidic residues; it reads LNKDTPYEMKKGMSSI.

The protein belongs to the TALE/IRO homeobox family. As to expression, expressed in the neural plate in overlapping patterns with other irx members, which all share an anterior border of expression. Broadly expressed in the tailbud rhombencephalon (hindbrain). Outside the nervous system and at tailbud stages, expressed in the developing otic vesicle and branchial arches.

It localises to the nucleus. Acts partially redundantly with other irx members in neural patterning. Required for formation of the posterior forebrain, midbrain, hindbrain, and to a lesser extent, spinal cord. Patterns the neuroectoderm in both the anterior/posterior and dorsal/ventral axes. Does not appear to play a role in pronephros kidney development. Involved in craniofacial and gonadal development. Modulates the migration of progenitor cell populations in branchial arches and gonads by repressing CXCL12. In Xenopus tropicalis (Western clawed frog), this protein is Iroquois-class homeodomain protein irx-5.